The following is a 490-amino-acid chain: Lipoprotein lipase (490 aa).

The first 25 residues, 1–25, serve as a signal peptide directing secretion; the sequence is MERGRGMGKTALLAVLCLCLRGAAG. The tract at residues 32 to 53 is interaction with GPIHBP1; it reads MNFEGIESKFSLRTPAEPDEDV. Cys54 and Cys67 are oxidised to a cystine. Asn70 is a glycosylation site (N-linked (GlcNAc...) (complex) asparagine). Tyr121 is subject to 3'-nitrotyrosine. Residue Ser159 is the Nucleophile of the active site. Residue Asp183 is the Charge relay system of the active site. 3'-nitrotyrosine is present on Tyr191. Ca(2+)-binding residues include Ala194, Arg197, Ser199, and Asp202. Cys243 and Cys266 form a disulfide bridge. An essential for determining substrate specificity region spans residues 243–266; the sequence is CNLGEALRLIAEKGFSDVDQLVKC. Catalysis depends on His268, which acts as the Charge relay system. Disulfide bonds link Cys291-Cys310 and Cys302-Cys305. One can recognise a PLAT domain in the interval 341-464; the sequence is FHYQVKIHFF…KGEEAAIFVK (124 aa). Tyr343 bears the 3'-nitrotyrosine mark. Asn354 and Asn386 each carry an N-linked (GlcNAc...) asparagine glycan. Residues 417–421 form an important for interaction with lipoprotein particles region; sequence WSDWW. The important for heparin binding stretch occupies residues 430–434; it reads RVRVK. Position 430–441 (430–441) interacts with heparin; sequence RVRVKSGETQKK. Positions 443-467 are interaction with GPIHBP1; that stretch reads VFCSRDGSSRLGKGEEAAIFVKCLE. Cys445 and Cys465 are disulfide-bonded. Residues 471-490 are disordered; the sequence is SRKRGGAKKASKENSAHESA. A compositionally biased stretch (basic and acidic residues) spans 480-490; that stretch reads ASKENSAHESA.

This sequence belongs to the AB hydrolase superfamily. Lipase family. As to quaternary structure, homodimer. Interacts with GPIHBP1 with 1:1 stoichiometry. Interacts with APOC2; the interaction activates LPL activity in the presence of lipids. Interaction with heparan sulfate proteoglycans is required to protect LPL against loss of activity. Associates with lipoprotein particles in blood plasma. Interacts with LMF1 and SEL1L; interaction with SEL1L is required to prevent aggregation of newly synthesized LPL in the endoplasmic reticulum (ER), and for normal export of LPL from the ER to the extracellular space. In terms of processing, N-glycan at Asn-70 is a triantennary complex oligosaccharide containing sialic acid, galactose, mannose, and N-acetylglucosamine, the reducing GlcNAc being sulfated at C6. Post-translationally, tyrosine nitration after lipopolysaccharide (LPS) challenge down-regulates the lipase activity.

The protein resides in the cell membrane. Its subcellular location is the secreted. It localises to the extracellular space. It is found in the extracellular matrix. The catalysed reaction is a triacylglycerol + H2O = a diacylglycerol + a fatty acid + H(+). The enzyme catalyses a 1,2-diacyl-sn-glycero-3-phosphocholine + H2O = a 2-acyl-sn-glycero-3-phosphocholine + a fatty acid + H(+). It carries out the reaction 1,2,3-tri-(9Z-octadecenoyl)-glycerol + H2O = di-(9Z)-octadecenoylglycerol + (9Z)-octadecenoate + H(+). It catalyses the reaction 1,2-di-(9Z-octadecenoyl)-sn-glycero-3-phosphocholine + H2O = (9Z-octadecenoyl)-sn-glycero-3-phosphocholine + (9Z)-octadecenoate + H(+). The catalysed reaction is 1,2,3-tributanoylglycerol + H2O = dibutanoylglycerol + butanoate + H(+). The enzyme catalyses 1,2-dihexadecanoyl-sn-glycero-3-phosphocholine + H2O = hexadecanoyl-sn-glycero-3-phosphocholine + hexadecanoate + H(+). Ca(2+) binding promotes protein stability and formation of the active homodimer. Key enzyme in triglyceride metabolism. Catalyzes the hydrolysis of triglycerides from circulating chylomicrons and very low density lipoproteins (VLDL), and thereby plays an important role in lipid clearance from the blood stream, lipid utilization and storage. Although it has both phospholipase and triglyceride lipase activities it is primarily a triglyceride lipase with low but detectable phospholipase activity. Mediates margination of triglyceride-rich lipoprotein particles in capillaries. Recruited to its site of action on the luminal surface of vascular endothelium by binding to GPIHBP1 and cell surface heparan sulfate proteoglycans. The protein is Lipoprotein lipase (LPL) of Gallus gallus (Chicken).